A 426-amino-acid chain; its full sequence is 3-isopropylmalate dehydratase large subunit (426 aa).

Positions 307, 367, and 370 each coordinate [4Fe-4S] cluster.

Belongs to the aconitase/IPM isomerase family. LeuC type 2 subfamily. Heterodimer of LeuC and LeuD. [4Fe-4S] cluster serves as cofactor.

The enzyme catalyses (2R,3S)-3-isopropylmalate = (2S)-2-isopropylmalate. It participates in amino-acid biosynthesis; L-leucine biosynthesis; L-leucine from 3-methyl-2-oxobutanoate: step 2/4. Catalyzes the isomerization between 2-isopropylmalate and 3-isopropylmalate, via the formation of 2-isopropylmaleate. This chain is 3-isopropylmalate dehydratase large subunit, found in Sulfurovum sp. (strain NBC37-1).